The chain runs to 25 residues: SPbeta prophage-derived uncharacterized protein YotF (25 aa).

The chain is SPbeta prophage-derived uncharacterized protein YotF (yotF) from Bacillus subtilis (strain 168).